The chain runs to 375 residues: MSTAGKVIKCKAAVLWELKKPFSIEEVEVAPPKAHEVRIKMVAVGICGTDDHVVSGTMVTPLPVILGHEAAGIVESVGEGVTTVKPGDKVIPLAIPQCGKCRICKNPESNYCLKNDVSNPQGTLQDGTSRFTCRRKPIHHFLGISTFSQYTVVDENAVAKIDAASPLEKVCLIGCGFSTGYGSAVNVAKVTPGSTCAVFGLGGVGLSAIMGCKAAGAARIIAVDINKDKFAKAKELGATECINPQDYKKPIQEVLKEMTDGGVDFSFEVIGRLDTMMASLLCCHEACGTSVIVGVPPDSQNLSMNPMLLLTGRTWKGAILGGFKSKECVPKLVADFMAKKFSLDALITHVLPFEKINEGFDLLHSGKSIRTILMF.

Residue Ser2 is modified to N-acetylserine. Residue Ser23 is modified to Phosphoserine. A Zn(2+)-binding site is contributed by Cys47. 48–52 (GTDDH) provides a ligand contact to NAD(+). 6 residues coordinate Zn(2+): His68, Cys98, Cys101, Cys104, Cys112, and Cys175. Residues 200 to 205 (GLGGVG), Asp224, Lys229, Ile270, 293 to 295 (VGV), 318 to 320 (AIL), and Arg370 contribute to the NAD(+) site.

The protein belongs to the zinc-containing alcohol dehydrogenase family. Dimer of identical or heterodimer of closely related subunits alpha, beta, or gamma that are encoded by genes ADH1A, ADH1B, and ADH1C, respectively. The cofactor is Zn(2+).

It is found in the cytoplasm. It carries out the reaction a primary alcohol + NAD(+) = an aldehyde + NADH + H(+). The enzyme catalyses a secondary alcohol + NAD(+) = a ketone + NADH + H(+). It catalyses the reaction butan-1-ol + NAD(+) = butanal + NADH + H(+). The catalysed reaction is 1-propanol + NAD(+) = propanal + NADH + H(+). In terms of biological role, alcohol dehydrogenase. Oxidizes primary as well as secondary alcohols. Ethanol is a very poor substrate. The protein is Alcohol dehydrogenase 1A (ADH1A) of Homo sapiens (Human).